Consider the following 488-residue polypeptide: MQYRDLRDFIRELEKRGELKRIQTPVSPILEMTEICDRTLRKGGPALLFEKPTGFDVPVLGNLFGTPKRVALGMGAEDVAELREIGKLLAFLKEPEPPKGLKDAWSKLPIFKKVISMAPKVVKDAPCHEVIEEGEDVDLNRLPIQHCWPGDVAPLITWGLTITKGPNKERQNLGIYRQQVIGRNKVIMRWLSHRGGALDYREWCQKYPDKPYPVCVALGADPATILGAVTPVPDTLSEYAFAGLLRGHRTELIKAVGSDLQVPASAEIVLEGVIHPGETAPEGPYGDHTGYYNEVDTFPVFTVERITRRREPIYHSTYTGRPPDEPAILGVALNEVFVPILQKQFPEITDFYLPPEGCSYRMAVVTMKKQYPGHAKRVMLGVWSFLRQFMYTKFVIVTDDDINARDWNDVIWAITTRMDPKRDTVMIDNTPIDYLDFASPISGLGSKMGLDATHKWPGETSREWGRAIEKDPAVVARVDALWGELGID.

Residue Asn-172 participates in Mn(2+) binding. Prenylated FMN-binding positions include 175 to 177 (IYR), 189 to 191 (RWL), and 194 to 195 (RG). Glu-238 contributes to the Mn(2+) binding site. Asp-287 (proton donor) is an active-site residue.

The protein belongs to the UbiD family. In terms of assembly, homohexamer. Requires prenylated FMN as cofactor. Mn(2+) is required as a cofactor.

It is found in the cell membrane. It carries out the reaction a 4-hydroxy-3-(all-trans-polyprenyl)benzoate + H(+) = a 2-(all-trans-polyprenyl)phenol + CO2. It functions in the pathway cofactor biosynthesis; ubiquinone biosynthesis. In terms of biological role, catalyzes the decarboxylation of 3-octaprenyl-4-hydroxy benzoate to 2-octaprenylphenol, an intermediate step in ubiquinone biosynthesis. The polypeptide is 3-octaprenyl-4-hydroxybenzoate carboxy-lyase (Ectopseudomonas mendocina (strain ymp) (Pseudomonas mendocina)).